Reading from the N-terminus, the 261-residue chain is Imidazole glycerol phosphate synthase subunit HisF (261 aa).

Catalysis depends on residues Asp16 and Asp135.

Belongs to the HisA/HisF family. In terms of assembly, heterodimer of HisH and HisF.

The protein localises to the cytoplasm. The catalysed reaction is 5-[(5-phospho-1-deoxy-D-ribulos-1-ylimino)methylamino]-1-(5-phospho-beta-D-ribosyl)imidazole-4-carboxamide + L-glutamine = D-erythro-1-(imidazol-4-yl)glycerol 3-phosphate + 5-amino-1-(5-phospho-beta-D-ribosyl)imidazole-4-carboxamide + L-glutamate + H(+). Its pathway is amino-acid biosynthesis; L-histidine biosynthesis; L-histidine from 5-phospho-alpha-D-ribose 1-diphosphate: step 5/9. IGPS catalyzes the conversion of PRFAR and glutamine to IGP, AICAR and glutamate. The HisF subunit catalyzes the cyclization activity that produces IGP and AICAR from PRFAR using the ammonia provided by the HisH subunit. The polypeptide is Imidazole glycerol phosphate synthase subunit HisF (Mycolicibacterium vanbaalenii (strain DSM 7251 / JCM 13017 / BCRC 16820 / KCTC 9966 / NRRL B-24157 / PYR-1) (Mycobacterium vanbaalenii)).